Here is a 194-residue protein sequence, read N- to C-terminus: ATP synthase subunit delta (194 aa).

It belongs to the ATPase delta chain family. F-type ATPases have 2 components, F(1) - the catalytic core - and F(0) - the membrane proton channel. F(1) has five subunits: alpha(3), beta(3), gamma(1), delta(1), epsilon(1). F(0) has three main subunits: a(1), b(2) and c(10-14). The alpha and beta chains form an alternating ring which encloses part of the gamma chain. F(1) is attached to F(0) by a central stalk formed by the gamma and epsilon chains, while a peripheral stalk is formed by the delta and b chains.

The protein resides in the cell inner membrane. Its function is as follows. F(1)F(0) ATP synthase produces ATP from ADP in the presence of a proton or sodium gradient. F-type ATPases consist of two structural domains, F(1) containing the extramembraneous catalytic core and F(0) containing the membrane proton channel, linked together by a central stalk and a peripheral stalk. During catalysis, ATP synthesis in the catalytic domain of F(1) is coupled via a rotary mechanism of the central stalk subunits to proton translocation. In terms of biological role, this protein is part of the stalk that links CF(0) to CF(1). It either transmits conformational changes from CF(0) to CF(1) or is implicated in proton conduction. The sequence is that of ATP synthase subunit delta from Bartonella quintana (strain Toulouse) (Rochalimaea quintana).